The following is a 247-amino-acid chain: Sugar fermentation stimulation protein homolog (247 aa).

The protein belongs to the SfsA family.

The protein is Sugar fermentation stimulation protein homolog of Methanococcoides burtonii (strain DSM 6242 / NBRC 107633 / OCM 468 / ACE-M).